The primary structure comprises 440 residues: Xaa-Pro dipeptidase (440 aa).

Mn(2+) contacts are provided by aspartate 244, aspartate 255, histidine 335, glutamate 380, and glutamate 419.

It belongs to the peptidase M24B family. Bacterial-type prolidase subfamily. It depends on Mn(2+) as a cofactor.

It carries out the reaction Xaa-L-Pro dipeptide + H2O = an L-alpha-amino acid + L-proline. In terms of biological role, splits dipeptides with a prolyl residue in the C-terminal position. The polypeptide is Xaa-Pro dipeptidase (Shewanella halifaxensis (strain HAW-EB4)).